The chain runs to 367 residues: Prenyltransferase idtC (367 aa).

Positions 1–22 (MTTLAWFAGRSMVLDLAALTSA) are cleaved as a signal peptide. The span at 32–42 (TSTPTSTPTST) shows a compositional bias: low complexity. Residues 32 to 84 (TSTPTSTPTSTDKAGTPPGSTIHHYGYPQGSVTKPNNSKTEKENGSPKDSKGN) are disordered. Asparagine 67 carries an N-linked (GlcNAc...) asparagine glycan. Positions 70–82 (KTEKENGSPKDSK) are enriched in basic and acidic residues. Residue histidine 132 coordinates substrate. Mg(2+) contacts are provided by aspartate 139 and aspartate 143. Arginine 148 contacts substrate. N-linked (GlcNAc...) asparagine glycosylation is present at asparagine 150. Substrate contacts are provided by lysine 233, threonine 234, glutamine 264, asparagine 271, and lysine 281.

Belongs to the FPP/GGPP synthase family. Mg(2+) is required as a cofactor.

Its pathway is secondary metabolite biosynthesis. Its function is as follows. Prenyltransferase; part of the gene cluster that mediates the biosynthesis of paspalitrems, indole-diterpene (IDT) mycotoxins that are potent tremorgens in mammals. The geranylgeranyl diphosphate (GGPP) synthase idtG is proposed to catalyze the first step in IDT biosynthesis via catalysis of a series of iterative condensations of isopentenyl diphosphate (IPP) with dimethylallyl diphosphate (DMAPP), geranyl diphosphate (GPP), and farnesyl diphosphate (FPP), to form GGPP. Condensation of indole-3-glycerol phosphate with GGPP by the prenyltransferase idtC then forms 3-geranylgeranylindole (3-GGI). Epoxidation of the two terminal alkenes of the geranylgeranyl moiety by the FAD-dependent monooxygenase idtM, and cyclization by the terpene cyclase idtB then leads to the production of paspaline. The cytochrome P450 monooxygenase idtP then catalyzes oxidative elimination of the pendant methyl group at C-12 of paspaline and generates the C-10 ketone to yield 13-desoxypaxilline. The cytochrome P450 monooxygenase idtQ may catalyze the C-13 oxidation of 13-desoxypaxilline to afford paxilline. Considering that both paspalicine and paxilline were detected in C.paspali, idtQ also catalyzes the formation of paspalinine from 13-desoxypaxilline via paspalicine as an intermediate. Finally, the alpha-prenyltransferase idtF prenylates paspalinine at the C-20 or the C-21 positions to yield paspalitrems A and C, respectively. The hydroxylation of paspalitrem A at C-32 by a still unknown oxidase affords paspalitrem B. This Claviceps paspali (Rye ergot fungus) protein is Prenyltransferase idtC.